We begin with the raw amino-acid sequence, 49 residues long: Putative DNA-directed RNA polymerase subunit omega (49 aa).

It belongs to the RNA polymerase subunit omega family.

The protein resides in the plastid. It is found in the chloroplast. The enzyme catalyses RNA(n) + a ribonucleoside 5'-triphosphate = RNA(n+1) + diphosphate. In terms of biological role, may be involved in RNA polymerase activity. This chain is Putative DNA-directed RNA polymerase subunit omega (rpoZ), found in Cyanidioschyzon merolae (strain NIES-3377 / 10D) (Unicellular red alga).